Here is a 136-residue protein sequence, read N- to C-terminus: MSKAQAVGSNYRVSLGLPVGAVMNSADNSGAKNLYVIAVKGIKGRLNRLPSAGVGDMVMATVKKGKPELRKKVCTGLVVRQRKHWKRKDGVYIYFEDNAGVMCNPKGEVKGNILGPVAKECSDLWPKVATNAGTIV.

It belongs to the universal ribosomal protein uL14 family.

The protein is Large ribosomal subunit protein uL14 (rpl23) of Dictyostelium discoideum (Social amoeba).